Here is a 168-residue protein sequence, read N- to C-terminus: MLVYQDLVSGDELLSDSFPYKEIENGMIWEVEGKWVVKGAVDVDIGANPSAEGGGEDEGVDDQAVKVVDIVDTFRLQEQPSMDKKVFLSCIKKYIKKLTPLLQGEQQEAFKNKIEGAVKYLLPKVKDLQFFVGESMADDSAMVFAYYKEGATDPTFLYIAPGLKEVKC.

The region spanning 1–168 (MLVYQDLVSG…IAPGLKEVKC (168 aa)) is the TCTP domain.

This sequence belongs to the TCTP family.

It is found in the cytoplasm. Functionally, involved in calcium binding and microtubule stabilization. This Cucumis melo (Muskmelon) protein is Translationally-controlled tumor protein homolog (TCTP).